A 116-amino-acid chain; its full sequence is MNLITTIITITITLSAVLATISFWLPQISPDAEKLSPYECGFDPLGSARLPFSLRFFLIAILFLLFDLEIALLLPLPWGDQLNTPTLTLIWSTAVLALLTLGLIYEWTQGGLEWAE.

The next 3 membrane-spanning stretches (helical) occupy residues 3 to 23 (LITTIITITITLSAVLATISF), 56 to 76 (FFLIAILFLLFDLEIALLLPL), and 87 to 107 (LTLIWSTAVLALLTLGLIYEW).

The protein belongs to the complex I subunit 3 family.

It is found in the mitochondrion membrane. The catalysed reaction is a ubiquinone + NADH + 5 H(+)(in) = a ubiquinol + NAD(+) + 4 H(+)(out). Core subunit of the mitochondrial membrane respiratory chain NADH dehydrogenase (Complex I) that is believed to belong to the minimal assembly required for catalysis. Complex I functions in the transfer of electrons from NADH to the respiratory chain. The immediate electron acceptor for the enzyme is believed to be ubiquinone. The sequence is that of NADH-ubiquinone oxidoreductase chain 3 (MT-ND3) from Oncorhynchus gorbuscha (Pink salmon).